A 227-amino-acid polypeptide reads, in one-letter code: Guanylate kinase (227 aa).

The 179-residue stretch at 21–199 (GNLFMVVAPS…ALAELECIVA (179 aa)) folds into the Guanylate kinase-like domain. Position 28–35 (28–35 (APSGAGKS)) interacts with ATP.

It belongs to the guanylate kinase family.

It localises to the cytoplasm. It carries out the reaction GMP + ATP = GDP + ADP. In terms of biological role, essential for recycling GMP and indirectly, cGMP. In Burkholderia mallei (strain ATCC 23344), this protein is Guanylate kinase.